Here is a 116-residue protein sequence, read N- to C-terminus: U16-barytoxin-Tl1c (116 aa).

An N-terminal signal peptide occupies residues 1-20 (MKTIIVFLSLLVLATKFGDA). A propeptide spanning residues 21-76 (NEGVNQEQMKEVIQNEFREDFLNEMAPMSLLQQLEAIESTLLEKEADRNSRQKRCN) is cleaved from the precursor. 3 cysteine pairs are disulfide-bonded: cysteine 75–cysteine 90, cysteine 82–cysteine 95, and cysteine 89–cysteine 110.

Belongs to the neurotoxin 14 (magi-1) family. 06 (ICK-Trit) subfamily. In terms of tissue distribution, expressed by the venom gland.

The protein resides in the secreted. Ion channel inhibitor. This is U16-barytoxin-Tl1c from Trittame loki (Brush-footed trapdoor spider).